A 320-amino-acid chain; its full sequence is Acetyl-coenzyme A carboxylase carboxyl transferase subunit alpha (320 aa).

Residues 41–295 (SIEEKAAQAL…GDAIAGALND (255 aa)) form the CoA carboxyltransferase C-terminal domain.

It belongs to the AccA family. In terms of assembly, acetyl-CoA carboxylase is a heterohexamer composed of biotin carboxyl carrier protein (AccB), biotin carboxylase (AccC) and two subunits each of ACCase subunit alpha (AccA) and ACCase subunit beta (AccD).

The protein localises to the cytoplasm. It carries out the reaction N(6)-carboxybiotinyl-L-lysyl-[protein] + acetyl-CoA = N(6)-biotinyl-L-lysyl-[protein] + malonyl-CoA. Its pathway is lipid metabolism; malonyl-CoA biosynthesis; malonyl-CoA from acetyl-CoA: step 1/1. Functionally, component of the acetyl coenzyme A carboxylase (ACC) complex. First, biotin carboxylase catalyzes the carboxylation of biotin on its carrier protein (BCCP) and then the CO(2) group is transferred by the carboxyltransferase to acetyl-CoA to form malonyl-CoA. The chain is Acetyl-coenzyme A carboxylase carboxyl transferase subunit alpha from Nitrobacter winogradskyi (strain ATCC 25391 / DSM 10237 / CIP 104748 / NCIMB 11846 / Nb-255).